A 507-amino-acid chain; its full sequence is Anthranilate synthase component 1 (507 aa).

Residue Ser65 coordinates L-tryptophan. Ser81 bears the Phosphoserine mark. A Phosphothreonine modification is found at Thr223. Pro280–Leu282 serves as a coordination point for L-tryptophan. Gly316–Thr317 lines the chorismate pocket. Residue Glu343 participates in Mg(2+) binding. Chorismate is bound by residues Tyr431, Arg452, Gly466–Gly468, and Gly468. Glu481 is a binding site for Mg(2+).

This sequence belongs to the anthranilate synthase component I family. As to quaternary structure, tetramer of two components I and two components II. Mg(2+) is required as a cofactor.

The catalysed reaction is chorismate + L-glutamine = anthranilate + pyruvate + L-glutamate + H(+). It participates in amino-acid biosynthesis; L-tryptophan biosynthesis; L-tryptophan from chorismate: step 1/5. In Saccharomyces cerevisiae (strain ATCC 204508 / S288c) (Baker's yeast), this protein is Anthranilate synthase component 1 (TRP2).